A 326-amino-acid polypeptide reads, in one-letter code: MVLNVYCCFFQISDIQTMKINQTILKEFILVGFSVYPHVQTFLFVVFFCLYLLTLAGNLIIMGLTWVDRSLHTPMYLFLSALSFSETCYTLTIVPKMLEDLLAKDRSISVTGCSLQMCFFLGLGGTNCIILTLMGYDRFLAICNPLRYPLLMTNIVCGQLVASACTAGFFISLTETALIFRDSFCRPNLVKHFFCHMLAVIRLSCIDSNHTEFIITLISVSGLLGTLLLIILTDVFIISTVLRIPSAEGKQKAFTTCASHLTVVIIHFGFASIVYLKPEASGDDTLIAVPYTVITPFLSPIIFSLRNKDMKNAFRRMMGNTVALKK.

The Extracellular segment spans residues 1–41; sequence MVLNVYCCFFQISDIQTMKINQTILKEFILVGFSVYPHVQT. Asn21 carries an N-linked (GlcNAc...) asparagine glycan. A helical membrane pass occupies residues 42-62; that stretch reads FLFVVFFCLYLLTLAGNLIIM. Residues 63–70 are Cytoplasmic-facing; it reads GLTWVDRS. A helical membrane pass occupies residues 71-91; it reads LHTPMYLFLSALSFSETCYTL. The Extracellular portion of the chain corresponds to 92-115; it reads TIVPKMLEDLLAKDRSISVTGCSL. Residues Cys113 and Cys205 are joined by a disulfide bond. A helical transmembrane segment spans residues 116 to 136; that stretch reads QMCFFLGLGGTNCIILTLMGY. Topologically, residues 137-155 are cytoplasmic; that stretch reads DRFLAICNPLRYPLLMTNI. Residues 156-176 traverse the membrane as a helical segment; that stretch reads VCGQLVASACTAGFFISLTET. At 177–213 the chain is on the extracellular side; that stretch reads ALIFRDSFCRPNLVKHFFCHMLAVIRLSCIDSNHTEF. N-linked (GlcNAc...) asparagine glycosylation is present at Asn209. Residues 214–233 traverse the membrane as a helical segment; it reads IITLISVSGLLGTLLLIILT. The Cytoplasmic portion of the chain corresponds to 234 to 253; that stretch reads DVFIISTVLRIPSAEGKQKA. A helical membrane pass occupies residues 254–274; it reads FTTCASHLTVVIIHFGFASIV. Residues 275–284 are Extracellular-facing; sequence YLKPEASGDD. Residues 285-305 form a helical membrane-spanning segment; that stretch reads TLIAVPYTVITPFLSPIIFSL. The Cytoplasmic segment spans residues 306–326; the sequence is RNKDMKNAFRRMMGNTVALKK.

Belongs to the G-protein coupled receptor 1 family.

It is found in the cell membrane. Its function is as follows. Odorant receptor. This is Olfactory receptor 10X1 (OR10X1) from Homo sapiens (Human).